A 110-amino-acid chain; its full sequence is DNA-binding protein Tneu_1679 (110 aa).

The protein belongs to the PDCD5 family.

This Pyrobaculum neutrophilum (strain DSM 2338 / JCM 9278 / NBRC 100436 / V24Sta) (Thermoproteus neutrophilus) protein is DNA-binding protein Tneu_1679.